A 1723-amino-acid chain; its full sequence is Lys-gingipain (1723 aa).

A signal peptide spans 1 to 24 (MRKLLLLIAASLLGVGLYAQSAKI). A propeptide spanning residues 25 to 228 (KLDAPTTRTT…ETAYKQLFNR (204 aa)) is cleaved from the precursor. Ca(2+) is bound by residues Asp313, Asp337, Asp339, Phe341, and Glu343. His444 functions as the Proton donor in the catalytic mechanism. Residue Cys477 is the Nucleophile of the active site. Positions 482 and 491 each coordinate Ca(2+). A disordered region spans residues 964-985 (WDAPNGTPNPNPNPNPGTTTLS). Positions 987, 989, 1000, 1002, 1004, 1006, 1021, 1023, 1042, 1145, 1146, 1430, 1432, 1444, 1446, 1448, 1450, 1480, 1495, and 1585 each coordinate Ca(2+).

It belongs to the peptidase C25 family. In terms of processing, proteolytically cleaved into a catalytic subunit and three adhesins. Arg-gingipain is involved in this post-translational processing.

The protein resides in the secreted. The catalysed reaction is Endopeptidase with strict specificity for lysyl bonds.. Activated by the thiol-reducing agents cysteine, 2-mercaptoethanol and dithiothreitol. Inhibited by iodacetamide, iodoacetic acid, leupeptin, tosyl-L-lysine and tosyl-L-phenylalanine. Not inhibited by elastatinal, chymostatin, cystatins, alpha1-antichymotrypsin or the serine protease inhibitors phenylmethylsulfonyl fluoride and diisopropylfluorophosphate. Not inhibited by metal ion chelators. Inhibited by the heavy metal ions Fe(3+), Zn(2+), Cu(2+) and Mn(2+). Its function is as follows. Cysteine proteinase with a strong preference for substrates with Lys in the P1 position. Hydrolyzes bovine hemoglobin, bovine serum albumin, casein, human placental type I collagen and human IgA and IgG. Disrupts the functions of polymorphonuclear leukocytes. May act as a virulence factor in the development of peridontal disease. Involved in the coaggregation of P.gingivalis with other oral bacteria. This is Lys-gingipain from Porphyromonas gingivalis (strain ATCC 33277 / DSM 20709 / CIP 103683 / JCM 12257 / NCTC 11834 / 2561).